The primary structure comprises 191 residues: UPF0312 protein Shewana3_1179 (191 aa).

The N-terminal stretch at 1–22 (MKKQLLAALIGGSLLAPMAASA) is a signal peptide.

It belongs to the UPF0312 family. Type 1 subfamily.

It localises to the periplasm. The protein is UPF0312 protein Shewana3_1179 of Shewanella sp. (strain ANA-3).